The following is a 292-amino-acid chain: Glutamate racemase (292 aa).

Substrate contacts are provided by residues 28–29 (DS) and 60–61 (YG). C91 functions as the Proton donor/acceptor in the catalytic mechanism. 92 to 93 (NT) is a substrate binding site. Catalysis depends on C200, which acts as the Proton donor/acceptor. 201 to 202 (TH) contacts substrate.

Belongs to the aspartate/glutamate racemases family.

The catalysed reaction is L-glutamate = D-glutamate. It participates in cell wall biogenesis; peptidoglycan biosynthesis. Functionally, provides the (R)-glutamate required for cell wall biosynthesis. In Nostoc sp. (strain PCC 7120 / SAG 25.82 / UTEX 2576), this protein is Glutamate racemase.